The sequence spans 179 residues: MQTRYDLILGSRRFSNYLWTLISFSGGIGFLLAGLSSYLGVQLLPFGNTETIVFIPQGIVMTFYGTIGILLSLFLLLNISLNVGGGYNSYDKSTGAIQIFRLGFPGKRRKILLQYKIQEIKSIKLSIAEGLNPKREIYLQTKDQRQIPLTRVGEPLLLSQIEEEAVELANFLNIPLEGL.

2 helical membrane passes run 21–41 (LISFSGGIGFLLAGLSSYLGV) and 59–79 (IVMTFYGTIGILLSLFLLLNI).

This sequence belongs to the Ycf4 family.

The protein resides in the plastid. It is found in the chloroplast thylakoid membrane. In terms of biological role, seems to be required for the assembly of the photosystem I complex. This Rhodomonas salina (Cryptomonas salina) protein is Photosystem I assembly protein Ycf4.